Here is a 181-residue protein sequence, read N- to C-terminus: Regulator of G-protein signaling 5 (181 aa).

Residues 64–180 (SLDKLLQNNY…VRSEFYQEFI (117 aa)) enclose the RGS domain.

It is found in the cytoplasm. The protein resides in the membrane. In terms of biological role, inhibits signal transduction by increasing the GTPase activity of G protein alpha subunits thereby driving them into their inactive GDP-bound form. Binds to G(i)-alpha and G(o)-alpha, but not to G(s)-alpha. The protein is Regulator of G-protein signaling 5 (RGS5) of Bos taurus (Bovine).